A 461-amino-acid polypeptide reads, in one-letter code: Photosystem II CP43 reaction center protein (461 aa).

A propeptide spanning residues 1 to 2 (ME) is cleaved from the precursor. T3 carries the N-acetylthreonine modification. Phosphothreonine is present on T3. 5 helical membrane passes run 57–81 (LFEVAHFIPEKPMYEQGLILLPHLA), 122–143 (LIGPETLEESFPFFGYVWKDKN), 166–188 (KAMYFGGLFDPWSVGGGDVRVIT), 243–263 (KPWAWARRAFVWSGEAYLSYS), and 279–300 (WFNNTVYPSEFYGPTGPEASQS). E355 serves as a coordination point for [CaMn4O5] cluster. A helical membrane pass occupies residues 435–459 (RARAAAAGFEKGIDRDNEPVLSMKP).

This sequence belongs to the PsbB/PsbC family. PsbC subfamily. As to quaternary structure, PSII is composed of 1 copy each of membrane proteins PsbA, PsbB, PsbC, PsbD, PsbE, PsbF, PsbH, PsbI, PsbJ, PsbK, PsbL, PsbM, PsbT, PsbX, PsbY, PsbZ, Psb30/Ycf12, at least 3 peripheral proteins of the oxygen-evolving complex and a large number of cofactors. It forms dimeric complexes. Binds multiple chlorophylls and provides some of the ligands for the Ca-4Mn-5O cluster of the oxygen-evolving complex. It may also provide a ligand for a Cl- that is required for oxygen evolution. PSII binds additional chlorophylls, carotenoids and specific lipids. is required as a cofactor.

Its subcellular location is the plastid. The protein localises to the chloroplast thylakoid membrane. Its function is as follows. One of the components of the core complex of photosystem II (PSII). It binds chlorophyll and helps catalyze the primary light-induced photochemical processes of PSII. PSII is a light-driven water:plastoquinone oxidoreductase, using light energy to abstract electrons from H(2)O, generating O(2) and a proton gradient subsequently used for ATP formation. This chain is Photosystem II CP43 reaction center protein, found in Tupiella akineta (Green alga).